The chain runs to 74 residues: Porwaprin-a (74 aa).

The N-terminal stretch at 1-24 is a signal peptide; that stretch reads MSSGGLLLLLGLLTLWEVLTPVSS. Positions 27–71 constitute a WAP domain; the sequence is RPKKLGLCPPRPQKPCVKECKNDWSCPGQQKCCNYGCIDECRDPI. Intrachain disulfides connect Cys-34–Cys-59, Cys-42–Cys-63, Cys-46–Cys-58, and Cys-52–Cys-67.

It belongs to the venom waprin family. In terms of tissue distribution, expressed by the venom gland.

Its subcellular location is the secreted. Functionally, damages membranes of susceptible bacteria. Has no hemolytic activity. Not toxic to mice. Does not inhibit the proteinases elastase and cathepsin G. The chain is Porwaprin-a from Pseudechis porphyriacus (Red-bellied black snake).